The sequence spans 261 residues: MAVGKNKRISKGKKGGKKKAADPYAKKDWYDIKAPSVFDIKNVGKTLVTRTQGTKIASEGLKHRVFEVSLADLQKDEDQSFRKIRLRAEDVQGKNVLTNFWGMDFTTDKLRSLVKKWQTLIEAHVDVKTTDSYTLRMFCIAFTKKRPNQQKRTCYAQSSQIRQIRRKMVEIMRNQASSCDLKELVAKFIPESIGREIEKATSSIFPLQNVYIRKVKILKAPKFDIGKLMEVHGDYSEDVGVKLDRPADETVAEAEPEIPGA.

Residues 1 to 18 (MAVGKNKRISKGKKGGKK) are compositionally biased toward basic residues. Residues 1–23 (MAVGKNKRISKGKKGGKKKAADP) are disordered.

It belongs to the eukaryotic ribosomal protein eS1 family. In terms of assembly, component of the small ribosomal subunit. Mature ribosomes consist of a small (40S) and a large (60S) subunit. The 40S subunit contains about 33 different proteins and 1 molecule of RNA (18S). The 60S subunit contains about 49 different proteins and 3 molecules of RNA (25S, 5.8S and 5S).

It localises to the cytoplasm. The protein is Small ribosomal subunit protein eS1 (cyc07) of Nicotiana tabacum (Common tobacco).